We begin with the raw amino-acid sequence, 211 residues long: Endo-1,4-beta-xylanase 3 (211 aa).

The signal sequence occupies residues 1–27; the sequence is MKVTAAFAGLLVTAFAAPVPEPVLVSR. In terms of domain architecture, GH11 spans 28–210; sequence SAGINYVQNY…GAGSASVTIS (183 aa). Glutamate 106 acts as the Nucleophile in catalysis. Residues cysteine 119 and cysteine 138 are joined by a disulfide bond. The Proton donor role is filled by glutamate 197.

This sequence belongs to the glycosyl hydrolase 11 (cellulase G) family.

It localises to the secreted. The enzyme catalyses Endohydrolysis of (1-&gt;4)-beta-D-xylosidic linkages in xylans.. It functions in the pathway glycan degradation; xylan degradation. In Aspergillus kawachii (strain NBRC 4308) (White koji mold), this protein is Endo-1,4-beta-xylanase 3 (xynC).